Reading from the N-terminus, the 132-residue chain is Small ribosomal subunit protein uS11 (132 aa).

The protein belongs to the universal ribosomal protein uS11 family. As to quaternary structure, part of the 30S ribosomal subunit. Interacts with proteins S7 and S18. Binds to IF-3.

In terms of biological role, located on the platform of the 30S subunit, it bridges several disparate RNA helices of the 16S rRNA. Forms part of the Shine-Dalgarno cleft in the 70S ribosome. This Legionella pneumophila (strain Paris) protein is Small ribosomal subunit protein uS11.